Consider the following 868-residue polypeptide: MSLIRVNRFGPRGGARKTLKVKKKAAVRQEWDNTVNDLTVHRATPEDLVRRHEMHKSKNRALVHWELQEKALKRKWKKQKPETSSIEKRKLSIMKEILSDQYQTQDVLEKSDHLLTAAKGLFVDVPRKRTGFPNVTMAPGSSRSPAGINQDPGTQSILNESIIEPQALNEVDDGGAESTAHSQSEDSESELPNSLSPHSNRNTERFLHQLKEENSELINQLWTDIQQKIAAQSQRTPPGSPSSELSAEDQKGALNATDAVKRIQAGLQPEESAEPVDSSYVGQVLNTRKPKPLLSKVKRKQDMRALSKQKKNMLSSSTTSADLASSNNSSLDVLKHMIHEVEHEMEEYERWTGREVKGLQGGQGLTGFTLSLVSSLCRLVRYLKESETQLRKEVETRQQLEQMLGDHRELIDALTAEILLLREENGAVQARLQQYMVTTDEQLISLTHAIKSCPVINNSRQESQAPERAAMGRRLVDNVGAPVVNSNVSMPLMLKGEEMVDFPQEELPVKLSQGPPPTENLNLASNFPTHIFEPAVMLTPPRQKSNSEFSPLQDVLRRTVQTRPAPRIPPTVEVIEKEQTWEKKNLPIDPDIQNSSEESRLFTQRWRVSHMGDDLENKSQPQFVSLSQPPQFVSLSQPPCSSPPSTQQSRNPVFSEEPTVLGDGQQLGTADALMHRKDIMARIAELTLQNSAMKAHLNNITSSGGEHGDGLREPSRQGNASEVPANFPAVQSLMPSSMEERIAELNRQSMEARSKLLQLIEQQKLVGLTLSSSPVSPVESPLRAWTEEGKRTIEVSVPGVEASESSKCNTVSPVSGVSSRRSSGAISNSCSPLNATSGSGKFTPVNPRTKQTEKQSEEGWFALSAHLP.

Disordered regions lie at residues arginine 129–threonine 154, aspartate 172–arginine 201, isoleucine 229–glutamine 250, and lysine 291–serine 326. Composition is skewed to polar residues over residues glutamate 190 to asparagine 200 and isoleucine 229 to leucine 245. Threonine 236 carries the phosphothreonine modification. A Phosphoserine modification is found at serine 240. Low complexity predominate over residues serine 315–serine 326. Positions arginine 381–glutamine 434 form a coiled coil. 2 disordered regions span residues proline 630 to glycine 664 and serine 702 to glutamate 722. Over residues serine 634–serine 649 the composition is skewed to low complexity. Serine 655 carries the post-translational modification Phosphoserine. Basic and acidic residues predominate over residues glutamate 706–serine 715. The stretch at serine 736–lysine 764 forms a coiled coil. Serine 772, serine 773, serine 776, and serine 831 each carry phosphoserine. The disordered stretch occupies residues serine 805–proline 868. The span at serine 812–serine 831 shows a compositional bias: low complexity.

As to quaternary structure, interacts with CEP120.

The protein resides in the cytoplasm. It localises to the cytoskeleton. Its subcellular location is the microtubule organizing center. It is found in the centrosome. The protein localises to the centriole. The protein resides in the spindle. Its function is as follows. Regulator required for centriole duplication, for proper bipolar spindle formation and chromosome congression in mitosis. In Rattus norvegicus (Rat), this protein is Spindle and centriole-associated protein 1 (Spice1).